We begin with the raw amino-acid sequence, 191 residues long: Protein G1-like1 (191 aa).

The segment at M1 to R29 is disordered. The ALOG domain maps to R23–R150. The Nuclear localization signal signature appears at K148–K152. The stretch at K152 to H179 forms a coiled coil.

This sequence belongs to the plant homeotic and developmental regulators ALOG protein family.

Its subcellular location is the nucleus. Its function is as follows. Probable transcription regulator that acts as a developmental regulator by promoting cell growth in response to light. In Oryza sativa subsp. indica (Rice), this protein is Protein G1-like1.